The sequence spans 133 residues: uncharacterized protein (133 aa).

Positions 82–133 (KIKSYSPSRSQKALNNPSKIRTKQTNNDTTIQQSNNTTSTNTKPSSNTNTQQ) are disordered. Over residues 86-100 (YSPSRSQKALNNPSK) the composition is skewed to polar residues. Low complexity predominate over residues 105–133 (QTNNDTTIQQSNNTTSTNTKPSSNTNTQQ).

This is an uncharacterized protein from Acidianus convivator (ABV).